The primary structure comprises 441 residues: Ribosomal protein uS12 methylthiotransferase RimO (441 aa).

In terms of domain architecture, MTTase N-terminal spans 7-117; it reads PKISFVSLGC…VLEAVHRAKP (111 aa). [4Fe-4S] cluster contacts are provided by Cys-16, Cys-52, Cys-81, Cys-148, Cys-152, and Cys-155. Residues 134–371 enclose the Radical SAM core domain; it reads LTPRHYAYLK…MARQQVISAR (238 aa). Positions 374-440 constitute a TRAM domain; sequence KRKVGTRQQI…AYDLHGTVAG (67 aa).

Belongs to the methylthiotransferase family. RimO subfamily. The cofactor is [4Fe-4S] cluster.

It localises to the cytoplasm. The enzyme catalyses L-aspartate(89)-[ribosomal protein uS12]-hydrogen + (sulfur carrier)-SH + AH2 + 2 S-adenosyl-L-methionine = 3-methylsulfanyl-L-aspartate(89)-[ribosomal protein uS12]-hydrogen + (sulfur carrier)-H + 5'-deoxyadenosine + L-methionine + A + S-adenosyl-L-homocysteine + 2 H(+). Catalyzes the methylthiolation of an aspartic acid residue of ribosomal protein uS12. The polypeptide is Ribosomal protein uS12 methylthiotransferase RimO (Rhodopseudomonas palustris (strain BisB5)).